A 96-amino-acid polypeptide reads, in one-letter code: Large ribosomal subunit protein eL21 (96 aa).

Residues 1–66 (MPSSNGPLEG…FDGQTGTVEG (66 aa)) are disordered.

The protein belongs to the eukaryotic ribosomal protein eL21 family. In terms of assembly, part of the 50S ribosomal subunit. Interacts with protein L18 and binds the 5S rRNA. Has been cross-linked to L18.

Its function is as follows. This is one of 5 proteins that mediate the attachment of the 5S rRNA onto the large ribosomal subunit, stabilizing the orientation of adjacent RNA domains. This chain is Large ribosomal subunit protein eL21 (rpl21e), found in Haloarcula marismortui (strain ATCC 43049 / DSM 3752 / JCM 8966 / VKM B-1809) (Halobacterium marismortui).